Consider the following 930-residue polypeptide: Isoleucine--tRNA ligase (930 aa).

The short motif at 57–67 (PYANGNIHVGH) is the 'HIGH' region element. Glu-554 lines the L-isoleucyl-5'-AMP pocket. A 'KMSKS' region motif is present at residues 595 to 599 (KMSKS). Lys-598 provides a ligand contact to ATP. Zn(2+) is bound by residues Cys-888, Cys-891, Cys-908, and Cys-911.

The protein belongs to the class-I aminoacyl-tRNA synthetase family. IleS type 1 subfamily. In terms of assembly, monomer. Zn(2+) serves as cofactor.

The protein localises to the cytoplasm. The enzyme catalyses tRNA(Ile) + L-isoleucine + ATP = L-isoleucyl-tRNA(Ile) + AMP + diphosphate. Catalyzes the attachment of isoleucine to tRNA(Ile). As IleRS can inadvertently accommodate and process structurally similar amino acids such as valine, to avoid such errors it has two additional distinct tRNA(Ile)-dependent editing activities. One activity is designated as 'pretransfer' editing and involves the hydrolysis of activated Val-AMP. The other activity is designated 'posttransfer' editing and involves deacylation of mischarged Val-tRNA(Ile). In Streptococcus pneumoniae (strain JJA), this protein is Isoleucine--tRNA ligase.